We begin with the raw amino-acid sequence, 130 residues long: MELWRQLNQAGLVPPGLGPPPQALREVSPVEIPGQTLRTAGADTGGACDSLLWIREELGNLRRVDVQLLGQLCSLGLEMGALREELVTILEEEEESSKEEEEDQEPQRKQEEEHLEACPAPHPPDFEMMI.

Residues 91-104 show a composition bias toward acidic residues; sequence EEEEESSKEEEEDQ. The interval 91-130 is disordered; it reads EEEEESSKEEEEDQEPQRKQEEEHLEACPAPHPPDFEMMI. Positions 105–116 are enriched in basic and acidic residues; it reads EPQRKQEEEHLE.

This Homo sapiens (Human) protein is Glutamate-rich protein 4 (ERICH4).